A 332-amino-acid chain; its full sequence is uncharacterized protein (332 aa).

A helical membrane pass occupies residues 27-47 (CAIVFLCVLLILPFLSCCTSL).

It localises to the membrane. This is an uncharacterized protein from Treponema pallidum (strain Nichols).